A 93-amino-acid chain; its full sequence is Small ribosomal subunit protein uS19 (93 aa).

It belongs to the universal ribosomal protein uS19 family.

Functionally, protein S19 forms a complex with S13 that binds strongly to the 16S ribosomal RNA. The protein is Small ribosomal subunit protein uS19 of Oenococcus oeni (strain ATCC BAA-331 / PSU-1).